The following is a 214-amino-acid chain: Probable transaldolase (214 aa).

K83 (schiff-base intermediate with substrate) is an active-site residue.

Belongs to the transaldolase family. Type 3B subfamily.

Its subcellular location is the cytoplasm. It catalyses the reaction D-sedoheptulose 7-phosphate + D-glyceraldehyde 3-phosphate = D-erythrose 4-phosphate + beta-D-fructose 6-phosphate. It functions in the pathway carbohydrate degradation; pentose phosphate pathway; D-glyceraldehyde 3-phosphate and beta-D-fructose 6-phosphate from D-ribose 5-phosphate and D-xylulose 5-phosphate (non-oxidative stage): step 2/3. Functionally, transaldolase is important for the balance of metabolites in the pentose-phosphate pathway. The sequence is that of Probable transaldolase from Streptococcus equi subsp. zooepidemicus (strain H70).